A 271-amino-acid polypeptide reads, in one-letter code: MRSLLAASTFLRSGASPLLRPLSRPLPSRLNLSRFGPVRPVSAAAAAADKSRGGGGSAMEAQPSYPGEIHVIVGPMFAGKTTALLRRVQVEAGTGSRNVALIKSDKDNRYGLDSVVTHDGTKMPCWALPELSSFQDKLGTEAYDKVDVIGIDEAQFFDDLHDFCCKAADRDGKIVVVAGLDGDYKRNKFGSVLDIIPLADSVTKLTARCELCGRRAFFTLRKTRETKTELIGGADVYMPVCRQHYLDGQIVIEATRIVLDLEKSKVIHAFK.

ATP contacts are provided by residues 74–81 and 152–155; these read GPMFAGKT and DEAQ. The active-site Proton acceptor is Glu-153. Tyr-184 is a binding site for substrate. Residues Cys-209 and Cys-212 each contribute to the Zn(2+) site. Tyr-237 contacts substrate. Cys-241 serves as a coordination point for Zn(2+).

Belongs to the thymidine kinase family.

The enzyme catalyses thymidine + ATP = dTMP + ADP + H(+). This chain is Thymidine kinase (TK), found in Oryza sativa subsp. japonica (Rice).